A 205-amino-acid chain; its full sequence is Holliday junction branch migration complex subunit RuvA (205 aa).

Residues 1–64 (MIGKLTGLVD…EDAIRLFGFP (64 aa)) are domain I. The interval 65 to 143 (SEVERDWFRL…ALGPVDSLTA (79 aa)) is domain II. Residues 144–153 (KLTIAEAEGT) form a flexible linker region. The tract at residues 153–205 (TAPVAAQDAITALVNLGYGRPQAAAAVATSLEALGETAPLADLIRRGLKELAR) is domain III.

This sequence belongs to the RuvA family. As to quaternary structure, homotetramer. Forms an RuvA(8)-RuvB(12)-Holliday junction (HJ) complex. HJ DNA is sandwiched between 2 RuvA tetramers; dsDNA enters through RuvA and exits via RuvB. An RuvB hexamer assembles on each DNA strand where it exits the tetramer. Each RuvB hexamer is contacted by two RuvA subunits (via domain III) on 2 adjacent RuvB subunits; this complex drives branch migration. In the full resolvosome a probable DNA-RuvA(4)-RuvB(12)-RuvC(2) complex forms which resolves the HJ.

The protein localises to the cytoplasm. In terms of biological role, the RuvA-RuvB-RuvC complex processes Holliday junction (HJ) DNA during genetic recombination and DNA repair, while the RuvA-RuvB complex plays an important role in the rescue of blocked DNA replication forks via replication fork reversal (RFR). RuvA specifically binds to HJ cruciform DNA, conferring on it an open structure. The RuvB hexamer acts as an ATP-dependent pump, pulling dsDNA into and through the RuvAB complex. HJ branch migration allows RuvC to scan DNA until it finds its consensus sequence, where it cleaves and resolves the cruciform DNA. This chain is Holliday junction branch migration complex subunit RuvA, found in Beijerinckia indica subsp. indica (strain ATCC 9039 / DSM 1715 / NCIMB 8712).